The primary structure comprises 332 residues: Ferredoxin--NADP reductase 1 (332 aa).

7 residues coordinate FAD: Asp35, Lys43, Phe48, Val88, Phe123, Asp284, and Thr325.

Belongs to the ferredoxin--NADP reductase type 2 family. As to quaternary structure, homodimer. FAD is required as a cofactor.

It catalyses the reaction 2 reduced [2Fe-2S]-[ferredoxin] + NADP(+) + H(+) = 2 oxidized [2Fe-2S]-[ferredoxin] + NADPH. This chain is Ferredoxin--NADP reductase 1, found in Listeria innocua serovar 6a (strain ATCC BAA-680 / CLIP 11262).